Consider the following 142-residue polypeptide: HTH-type transcriptional regulator MntR (142 aa).

Residues 1-63 (MPTPSMEDYI…YEKYRGLVLT (63 aa)) form the HTH dtxR-type domain. The Mn(2+) site is built by Asp8, Glu11, His77, Glu99, Glu102, and His103.

This sequence belongs to the DtxR/MntR family. As to quaternary structure, homodimer.

The protein resides in the cytoplasm. Its activity is regulated as follows. DNA binding is strongly activated by Mn(2+). Functionally, central regulator of manganese homeostasis. The protein is HTH-type transcriptional regulator MntR of Bacillus cereus (strain ATCC 14579 / DSM 31 / CCUG 7414 / JCM 2152 / NBRC 15305 / NCIMB 9373 / NCTC 2599 / NRRL B-3711).